Reading from the N-terminus, the 388-residue chain is Succinate--CoA ligase [ADP-forming] subunit beta (388 aa).

One can recognise an ATP-grasp domain in the interval 9 to 244 (KQLFAEYGLP…PSQDDAREAH (236 aa)). Residues Lys46, 53–55 (GRG), Glu99, Thr102, and Glu107 contribute to the ATP site. Positions 199 and 213 each coordinate Mg(2+). Substrate is bound by residues Asn264 and 321–323 (GIV).

Belongs to the succinate/malate CoA ligase beta subunit family. Heterotetramer of two alpha and two beta subunits. Mg(2+) serves as cofactor.

The enzyme catalyses succinate + ATP + CoA = succinyl-CoA + ADP + phosphate. It carries out the reaction GTP + succinate + CoA = succinyl-CoA + GDP + phosphate. It participates in carbohydrate metabolism; tricarboxylic acid cycle; succinate from succinyl-CoA (ligase route): step 1/1. In terms of biological role, succinyl-CoA synthetase functions in the citric acid cycle (TCA), coupling the hydrolysis of succinyl-CoA to the synthesis of either ATP or GTP and thus represents the only step of substrate-level phosphorylation in the TCA. The beta subunit provides nucleotide specificity of the enzyme and binds the substrate succinate, while the binding sites for coenzyme A and phosphate are found in the alpha subunit. The sequence is that of Succinate--CoA ligase [ADP-forming] subunit beta from Pseudomonas paraeruginosa (strain DSM 24068 / PA7) (Pseudomonas aeruginosa (strain PA7)).